The following is an 89-amino-acid chain: Small ribosomal subunit protein uS14 (89 aa).

This sequence belongs to the universal ribosomal protein uS14 family. As to quaternary structure, part of the 30S ribosomal subunit. Contacts proteins S3 and S10.

In terms of biological role, binds 16S rRNA, required for the assembly of 30S particles and may also be responsible for determining the conformation of the 16S rRNA at the A site. The polypeptide is Small ribosomal subunit protein uS14 (Porphyromonas gingivalis (strain ATCC 33277 / DSM 20709 / CIP 103683 / JCM 12257 / NCTC 11834 / 2561)).